Here is a 726-residue protein sequence, read N- to C-terminus: Catalase-peroxidase (726 aa).

Residues 1 to 33 are disordered; the sequence is MSTTDDTHNTLSAGKCPFHQGGHDRSAGAGTAS. A cross-link (tryptophyl-tyrosyl-methioninium (Trp-Tyr) (with M-252)) is located at residues 105 to 226; sequence WHGAGTYRSI…LGATEMGLIY (122 aa). His-106 (proton acceptor) is an active-site residue. Residues 226–252 constitute a cross-link (tryptophyl-tyrosyl-methioninium (Tyr-Met) (with W-105)); it reads YVNPEGPDHSGEPLSAAAAIRATFGNM. A heme b-binding site is contributed by His-267.

It belongs to the peroxidase family. Peroxidase/catalase subfamily. As to quaternary structure, homodimer or homotetramer. It depends on heme b as a cofactor. In terms of processing, formation of the three residue Trp-Tyr-Met cross-link is important for the catalase, but not the peroxidase activity of the enzyme.

The catalysed reaction is H2O2 + AH2 = A + 2 H2O. It carries out the reaction 2 H2O2 = O2 + 2 H2O. In terms of biological role, bifunctional enzyme with both catalase and broad-spectrum peroxidase activity. In Salmonella arizonae (strain ATCC BAA-731 / CDC346-86 / RSK2980), this protein is Catalase-peroxidase.